The primary structure comprises 342 residues: Zinc transporter ZIP11 (342 aa).

Transmembrane regions (helical) follow at residues 12-32, 44-64, 72-92, 194-214, 263-285, 290-307, and 322-342; these read LLGTFFTWAMTAAGAALVFIF, LGFAAGVMLAASYWSLLAPAV, GFGAFAFFPVAVGFTLGAAFV, IALLILAITIHNIPEGLAVGV, FWYGQLSGMVEPLAGVFGAFAVV, ILPYALAFAAGAMVYVVM, and LASWASILGFVVMMSLDVGLG.

It belongs to the ZIP transporter (TC 2.A.5) family. Highly expressed in the testes and portions of the digestive system including the stomach, ileum and cecum. In contrast, expressed at very low levels in liver, duodenum, jejunum, and colon.

It is found in the cell membrane. The protein localises to the nucleus. Its subcellular location is the cytoplasm. It localises to the golgi apparatus. It carries out the reaction Zn(2+)(in) = Zn(2+)(out). The enzyme catalyses Cu(2+)(in) = Cu(2+)(out). In terms of biological role, zinc importer that regulates cytosolic zinc concentration either via zinc influx from the extracellular compartment or efflux from intracellular organelles such as Golgi apparatus. May transport copper ions as well. The transport mechanism remains to be elucidated. The protein is Zinc transporter ZIP11 (Slc39a11) of Mus musculus (Mouse).